A 650-amino-acid polypeptide reads, in one-letter code: tRNA-dihydrouridine(47) synthase [NAD(P)(+)]-like (650 aa).

Disordered regions lie at residues Met-1–Glu-24 and Glu-46–Lys-120. Ala-2 is modified (N-acetylalanine). Basic and acidic residues-rich tracts occupy residues Lys-48–Glu-58 and Pro-70–Asp-79. Residues Lys-101–Val-113 are compositionally biased toward basic residues. 2 consecutive C3H1-type zinc fingers follow at residues Tyr-118–Gly-148 and Ala-156–Pro-186. The tract at residues Phe-235–Pro-284 is disordered. Ser-236 is subject to Phosphoserine. Phosphothreonine is present on Thr-273. Residues Ser-276 and Ser-277 each carry the phosphoserine modification. Residues Pro-311–Thr-313 and Gln-365 contribute to the FMN site. The active-site Proton donor is Cys-396. Residue Lys-416 forms a Glycyl lysine isopeptide (Lys-Gly) (interchain with G-Cter in SUMO2) linkage. Residues Lys-435, His-465, Asn-497–Asp-499, and Ala-520–Arg-521 each bind FMN.

It belongs to the Dus family. Dus3 subfamily. FMN is required as a cofactor.

It catalyses the reaction 5,6-dihydrouridine(47) in tRNA + NAD(+) = uridine(47) in tRNA + NADH + H(+). The catalysed reaction is 5,6-dihydrouridine(47) in tRNA + NADP(+) = uridine(47) in tRNA + NADPH + H(+). The enzyme catalyses a 5,6-dihydrouridine in mRNA + NAD(+) = a uridine in mRNA + NADH + H(+). It carries out the reaction a 5,6-dihydrouridine in mRNA + NADP(+) = a uridine in mRNA + NADPH + H(+). Functionally, catalyzes the synthesis of dihydrouridine, a modified base, in various RNAs, such as tRNAs, mRNAs and some long non-coding RNAs (lncRNAs). Mainly modifies the uridine in position 47 (U47) in the D-loop of most cytoplasmic tRNAs. Also able to mediate the formation of dihydrouridine in some mRNAs, thereby regulating their translation. The polypeptide is tRNA-dihydrouridine(47) synthase [NAD(P)(+)]-like (Homo sapiens (Human)).